Reading from the N-terminus, the 377-residue chain is Nitric oxide reductase FlRd-NAD(+) reductase (377 aa).

The protein belongs to the FAD-dependent oxidoreductase family. FAD serves as cofactor.

The protein resides in the cytoplasm. The enzyme catalyses 2 reduced [nitric oxide reductase rubredoxin domain] + NAD(+) + H(+) = 2 oxidized [nitric oxide reductase rubredoxin domain] + NADH. It participates in nitrogen metabolism; nitric oxide reduction. Functionally, one of at least two accessory proteins for anaerobic nitric oxide (NO) reductase. Reduces the rubredoxin moiety of NO reductase. In Escherichia coli O127:H6 (strain E2348/69 / EPEC), this protein is Nitric oxide reductase FlRd-NAD(+) reductase.